The chain runs to 219 residues: Phosphatidylserine decarboxylase proenzyme (219 aa).

Residue S182 is the Schiff-base intermediate with substrate; via pyruvic acid of the active site. S182 is subject to Pyruvic acid (Ser); by autocatalysis.

The protein belongs to the phosphatidylserine decarboxylase family. PSD-A subfamily. As to quaternary structure, heterodimer of a large membrane-associated beta subunit and a small pyruvoyl-containing alpha subunit. Pyruvate serves as cofactor. Post-translationally, is synthesized initially as an inactive proenzyme. Formation of the active enzyme involves a self-maturation process in which the active site pyruvoyl group is generated from an internal serine residue via an autocatalytic post-translational modification. Two non-identical subunits are generated from the proenzyme in this reaction, and the pyruvate is formed at the N-terminus of the alpha chain, which is derived from the carboxyl end of the proenzyme. The post-translation cleavage follows an unusual pathway, termed non-hydrolytic serinolysis, in which the side chain hydroxyl group of the serine supplies its oxygen atom to form the C-terminus of the beta chain, while the remainder of the serine residue undergoes an oxidative deamination to produce ammonia and the pyruvoyl prosthetic group on the alpha chain.

The protein resides in the cell membrane. It catalyses the reaction a 1,2-diacyl-sn-glycero-3-phospho-L-serine + H(+) = a 1,2-diacyl-sn-glycero-3-phosphoethanolamine + CO2. The protein operates within phospholipid metabolism; phosphatidylethanolamine biosynthesis; phosphatidylethanolamine from CDP-diacylglycerol: step 2/2. In terms of biological role, catalyzes the formation of phosphatidylethanolamine (PtdEtn) from phosphatidylserine (PtdSer). This chain is Phosphatidylserine decarboxylase proenzyme, found in Chlorobium phaeovibrioides (strain DSM 265 / 1930) (Prosthecochloris vibrioformis (strain DSM 265)).